A 236-amino-acid polypeptide reads, in one-letter code: Eukaryotic translation initiation factor 3 subunit J (236 aa).

Disordered stretches follow at residues 1–88 and 188–236; these read MADD…LANM and SEKQ…DDFM. The segment covering 28–46 has biased composition (acidic residues); the sequence is GEDDDEDVKESWEDEEEKK. Basic and acidic residues-rich tracts occupy residues 47–58, 68–88, and 188–197; these read DEEKPTKTEAPV, AKLEEQERLNEEEERKRLANM, and SEKQKMEKAN. 2 coiled-coil regions span residues 61–112 and 174–209; these read KPNK…LKSA and ADIKKVKMSVESLHSEKQKMEKANAKKSAAKAKGKV. Basic residues predominate over residues 201–210; sequence SAAKAKGKVS.

The protein belongs to the eIF-3 subunit J family. In terms of assembly, component of the eukaryotic translation initiation factor 3 (eIF-3) complex. The eIF-3 complex interacts with pix.

It is found in the cytoplasm. In terms of biological role, component of the eukaryotic translation initiation factor 3 (eIF-3) complex, which is involved in protein synthesis of a specialized repertoire of mRNAs and, together with other initiation factors, stimulates binding of mRNA and methionyl-tRNAi to the 40S ribosome. The eIF-3 complex specifically targets and initiates translation of a subset of mRNAs involved in cell proliferation. The sequence is that of Eukaryotic translation initiation factor 3 subunit J from Drosophila virilis (Fruit fly).